The following is a 986-amino-acid chain: Translation initiation factor IF-2 (986 aa).

A compositionally biased stretch (basic and acidic residues) spans 75–94 (KRLSRLEEQSRKTYEKEQHL). 4 disordered regions span residues 75–105 (KRLS…APPL), 127–148 (PPSK…PDAP), 185–258 (SEVP…VSFD), and 277–394 (GRHK…HEED). Composition is skewed to low complexity over residues 185-210 (SEVP…ESPL) and 218-235 (SEPQ…LPEI). Basic and acidic residues predominate over residues 292-313 (DALKDEFEPKPAEESRVEEKVV). Residues 315–338 (AKKPPVKAAADVKPKPVVADSSSS) are compositionally biased toward low complexity. The segment covering 339–348 (AKKKGKKKKK) has biased composition (basic residues). A tr-type G domain is found at 483–653 (TRPPVVTIMG…LTEAEMRELR (171 aa)). The interval 492–499 (GHVDHGKT) is G1. Residue 492-499 (GHVDHGKT) participates in GTP binding. Positions 517–521 (GITQH) are G2. Positions 539–542 (DTPG) are G3. Residues 539 to 543 (DTPGH) and 593 to 596 (NKID) contribute to the GTP site. The G4 stretch occupies residues 593-596 (NKID). The segment at 629–631 (SAK) is G5.

The protein belongs to the TRAFAC class translation factor GTPase superfamily. Classic translation factor GTPase family. IF-2 subfamily.

The protein localises to the cytoplasm. One of the essential components for the initiation of protein synthesis. Protects formylmethionyl-tRNA from spontaneous hydrolysis and promotes its binding to the 30S ribosomal subunits. Also involved in the hydrolysis of GTP during the formation of the 70S ribosomal complex. In Pelodictyon phaeoclathratiforme (strain DSM 5477 / BU-1), this protein is Translation initiation factor IF-2.